The chain runs to 793 residues: Probable exo-1,4-beta-xylosidase xlnD (793 aa).

A signal peptide spans 1-20 (MPRVASVAAVLAALLPSALG). N-linked (GlcNAc...) asparagine glycosylation is found at Asn23, Asn87, and Asn142. Asp310 is a catalytic residue. 11 N-linked (GlcNAc...) asparagine glycosylation sites follow: Asn326, Asn385, Asn404, Asn440, Asn477, Asn518, Asn559, Asn614, Asn652, Asn679, and Asn701.

Belongs to the glycosyl hydrolase 3 family.

The protein localises to the secreted. It catalyses the reaction Hydrolysis of (1-&gt;4)-beta-D-xylans, to remove successive D-xylose residues from the non-reducing termini.. It functions in the pathway glycan degradation; xylan degradation. Functionally, xylan 1,4-beta-xylosidase involved in the hydrolysis of xylan, a major structural heterogeneous polysaccharide found in plant biomass representing the second most abundant polysaccharide in the biosphere, after cellulose. The sequence is that of Probable exo-1,4-beta-xylosidase xlnD (xlnD) from Aspergillus terreus (strain NIH 2624 / FGSC A1156).